A 130-amino-acid chain; its full sequence is Small ribosomal subunit protein uS9 (130 aa).

The protein belongs to the universal ribosomal protein uS9 family.

The chain is Small ribosomal subunit protein uS9 from Brevibacillus brevis (strain 47 / JCM 6285 / NBRC 100599).